The following is a 221-amino-acid chain: MVDIKGMWKDLRATPVETLVRWQEQRFLWLLMAVAMGGLIILAHSFFQIYLYMAPCEQCVYIRFAMFVMVFGGLIAAINPKNIILKLIGCLAAFYGSIMGIKFSVKLNGIHYAVHNPDPDALFGVQGCSTDPTFPFGLPLAEWAPEWFRPTGDCGYDAPVVLTRNAQFCPAVVCGNVSALRRLVSDPALAFYEYGAGVPAGVWAMFCTVADYERRLGNQAD.

Residues 27–47 (FLWLLMAVAMGGLIILAHSFF) traverse the membrane as a helical segment. A disulfide bond links Cys56 and Cys59. 2 helical membrane-spanning segments follow: residues 64-84 (FAMF…KNII) and 85-105 (LKLI…KFSV). Cys128 and Cys154 form a disulfide bridge. The chain crosses the membrane as a helical span at residues 189 to 209 (LAFYEYGAGVPAGVWAMFCTV).

Belongs to the DsbB family. DsbI subfamily. In terms of assembly, interacts with DsbL.

It localises to the cell inner membrane. Functionally, required for disulfide bond formation in some proteins. Part of a redox system composed of DsbI and DsbL that mediates formation of an essential disulfide bond in AssT. The protein is Protein-disulfide oxidoreductase DsbI of Lelliottia amnigena (Enterobacter amnigenus).